We begin with the raw amino-acid sequence, 731 residues long: DNA ligase (731 aa).

Residues 59–63, 108–109, and E142 each bind NAD(+); these read DSEYD and SL. Residue K144 is the N6-AMP-lysine intermediate of the active site. R165, E202, K318, and K342 together coordinate NAD(+). Residues C434, C437, C452, and C458 each coordinate Zn(2+). The BRCT domain occupies 645–731; that stretch reads LASSPLSGKI…ENDGQDSIKI (87 aa).

This sequence belongs to the NAD-dependent DNA ligase family. LigA subfamily. Mg(2+) is required as a cofactor. The cofactor is Mn(2+).

It carries out the reaction NAD(+) + (deoxyribonucleotide)n-3'-hydroxyl + 5'-phospho-(deoxyribonucleotide)m = (deoxyribonucleotide)n+m + AMP + beta-nicotinamide D-nucleotide.. Its function is as follows. DNA ligase that catalyzes the formation of phosphodiester linkages between 5'-phosphoryl and 3'-hydroxyl groups in double-stranded DNA using NAD as a coenzyme and as the energy source for the reaction. It is essential for DNA replication and repair of damaged DNA. The sequence is that of DNA ligase from Zymomonas mobilis subsp. mobilis (strain ATCC 31821 / ZM4 / CP4).